The primary structure comprises 96 residues: ASNSD1 upstream open reading frame protein (96 aa).

The segment covering 1–10 has biased composition (basic and acidic residues); it reads MPSRGTRPED. Residues 1 to 28 form a disordered region; it reads MPSRGTRPEDSSVLIPTDNSTPHKEDLS. Positions 23-96 form a coiled coil; sequence HKEDLSSKIK…ENLDKTKIKK (74 aa).

As to quaternary structure, component of the PAQosome complex which is responsible for the biogenesis of several protein complexes and which consists of R2TP complex members RUVBL1, RUVBL2, RPAP3 and PIH1D1, URI complex members PFDN2, PFDN6, PDRG1, UXT and URI1 as well as ASDURF, POLR2E and DNAAF10/WDR92.

The protein localises to the cytoplasm. The chain is ASNSD1 upstream open reading frame protein from Homo sapiens (Human).